Reading from the N-terminus, the 363-residue chain is MSAIYNFCAGPAMLPQAVMQKAQQELVDWNGLGVSVMEISHRSKEFIALTDQAEVTLRKLMSIPANYHVLFMHGGGRAQFSNVVNNFLGDNGQALYLVSGQWSSAAVTEAKKLVSEHNIDSINIVEQINGLYQVKLPDLTAIDKDYRYVHYCSNETVDGIEIFEELDSPWPIVADLSSTIMSHEIDVSKYGLIYAGAQKNIGPSGLSIVIVRDDMLKLPSLPQSSVMDYRVAVEHGSMFNTPPTFAWYLASEVFAWLAAKGGVSAMAEVNQQKAALLYDCIDSNPFYKNGVAPHNRSRMNVTFQLVNDALDSEFLAQAEQAGLVALKGHRIVGGMRASIYNAMPLAGVQALVDFMNNFAVKHS.

Arg42 contacts L-glutamate. Residues 76–77, Trp102, Thr156, Asp175, and Gln198 each bind pyridoxal 5'-phosphate; that span reads GR. Lys199 is modified (N6-(pyridoxal phosphate)lysine). Residue 240–241 coordinates pyridoxal 5'-phosphate; sequence NT.

It belongs to the class-V pyridoxal-phosphate-dependent aminotransferase family. SerC subfamily. In terms of assembly, homodimer. The cofactor is pyridoxal 5'-phosphate.

The protein localises to the cytoplasm. The enzyme catalyses O-phospho-L-serine + 2-oxoglutarate = 3-phosphooxypyruvate + L-glutamate. It carries out the reaction 4-(phosphooxy)-L-threonine + 2-oxoglutarate = (R)-3-hydroxy-2-oxo-4-phosphooxybutanoate + L-glutamate. The protein operates within amino-acid biosynthesis; L-serine biosynthesis; L-serine from 3-phospho-D-glycerate: step 2/3. It participates in cofactor biosynthesis; pyridoxine 5'-phosphate biosynthesis; pyridoxine 5'-phosphate from D-erythrose 4-phosphate: step 3/5. Catalyzes the reversible conversion of 3-phosphohydroxypyruvate to phosphoserine and of 3-hydroxy-2-oxo-4-phosphonooxybutanoate to phosphohydroxythreonine. The protein is Phosphoserine aminotransferase of Shewanella frigidimarina (strain NCIMB 400).